An 87-amino-acid chain; its full sequence is UPF0250 protein plu1293 (87 aa).

Belongs to the UPF0250 family.

The protein is UPF0250 protein plu1293 of Photorhabdus laumondii subsp. laumondii (strain DSM 15139 / CIP 105565 / TT01) (Photorhabdus luminescens subsp. laumondii).